The chain runs to 590 residues: MNGDEVRARASELPAEPGVYQFVARDPDGTADGERVLYVGKAVDIRDRVRSYGDPRSERIAGMVARADDVTVAVTDTETQALLLEANLVKRHQPRYNVRLKDDKSYPLVQVTSHREAPRIEVTRDPDPGAAAFGPYTDKGDVETVVKAVRSVYGLRGCSEHKYRDRERPCLDYEMGLCAAPCTGAISEREYREAVESATRFFEGETGALADPLRREMAAAAQAEAFERAANLRDRLAVVEGFHEGGGAAVAAGDADAGASTDVLGVAVEGDAATVARLHAEGGQLVERDQHRLEAPQGEDRVAAVLAAFLVQYYAERDLPERILLPEPHGDDEVAAWLDAADVAVGVPGAGREARLVELALKNAHRRAGGGDELGALADALGVRRPERIEGVDVSHAQGREVVGSNVCFVDGSAETADYRRKKLDEENDDYANMRRLVGWRAERAVDGRDDRPDPDVLLVDGGRGQLDAALDAVEAAGWDGPDAVIALAKDEEVVVTPDRTYDWGSDAPQLHVLQRVRDEAHRFAVAYHRTLRDDVTTALDGITGVGPELRARLLGRFGSVAGVRQASVKDLRDVAGVGEATAETIAKRL.

Residues 15–98 form the GIY-YIG domain; the sequence is AEPGVYQFVA…VKRHQPRYNV (84 aa). In terms of domain architecture, UVR spans 207-242; that stretch reads GALADPLRREMAAAAQAEAFERAANLRDRLAVVEGF.

Belongs to the UvrC family. In terms of assembly, interacts with UvrB in an incision complex.

It localises to the cytoplasm. The UvrABC repair system catalyzes the recognition and processing of DNA lesions. UvrC both incises the 5' and 3' sides of the lesion. The N-terminal half is responsible for the 3' incision and the C-terminal half is responsible for the 5' incision. The sequence is that of UvrABC system protein C from Halobacterium salinarum (strain ATCC 29341 / DSM 671 / R1).